The chain runs to 177 residues: Transcription antitermination protein NusB (177 aa).

The interval 1-35 (MTDSTHPTPSARPPRQPRTGTTGTGARKAGSKSGR) is disordered. The segment covering 17 to 28 (PRTGTTGTGARK) has biased composition (low complexity).

The protein belongs to the NusB family.

Involved in transcription antitermination. Required for transcription of ribosomal RNA (rRNA) genes. Binds specifically to the boxA antiterminator sequence of the ribosomal RNA (rrn) operons. This Acidovorax sp. (strain JS42) protein is Transcription antitermination protein NusB.